Here is a 363-residue protein sequence, read N- to C-terminus: Ethanolamine kinase 1 (363 aa).

The protein belongs to the choline/ethanolamine kinase family.

The protein localises to the cytoplasm. The enzyme catalyses ethanolamine + ATP = phosphoethanolamine + ADP + H(+). It functions in the pathway phospholipid metabolism; phosphatidylethanolamine biosynthesis; phosphatidylethanolamine from ethanolamine: step 1/3. In terms of biological role, highly specific for ethanolamine phosphorylation. May be a rate-controlling step in phosphatidylethanolamine biosynthesis. The polypeptide is Ethanolamine kinase 1 (Etnk1) (Mus musculus (Mouse)).